Consider the following 109-residue polypeptide: Tyrosine-protein phosphatase 16 (109 aa).

The region spanning 1-109 is the Tyrosine-protein phosphatase domain; sequence WRMVTEHTST…RIKTQKPIVV (109 aa). Asp81 is a binding site for substrate.

It belongs to the protein-tyrosine phosphatase family.

The catalysed reaction is O-phospho-L-tyrosyl-[protein] + H2O = L-tyrosyl-[protein] + phosphate. This chain is Tyrosine-protein phosphatase 16 (STY-16), found in Styela plicata (Wrinkled sea squirt).